An 823-amino-acid chain; its full sequence is Bifunctional enzyme flvA (823 aa).

Residues 56-535 (TAKFEMALMP…QRLYDAKFYI (480 aa)) are pyridoxal 5'-phosphate-dependent lyase. K331 carries the N6-(pyridoxal phosphate)lysine modification. An alpha-ketoglutarate-dependent oxygenase region spans residues 573-823 (DFDALQQVSH…TLPMNVPLWL (251 aa)). H703 and D705 together coordinate Fe cation.

In the N-terminal section; belongs to the trans-sulfuration enzymes family. The protein in the C-terminal section; belongs to the iron/ascorbate-dependent oxidoreductase family. It depends on pyridoxal 5'-phosphate as a cofactor. Requires Fe(2+) as cofactor.

The enzyme catalyses O-acetyl-L-homoserine + 3-methyl-2-oxobutanoate = (6S)-6-amino-3,3-dimethyl-2-oxoheptanedioate + acetate + H(+). It catalyses the reaction (6S)-3,3-dimethylpiperidine-2,6-dicarboxylate + 2-oxoglutarate + AH2 + O2 + H(+) = (2S)-5,5-dimethylpiperidine-2-carboxylate + succinate + A + 2 CO2 + H2O. Its pathway is secondary metabolite biosynthesis; terpenoid biosynthesis. In terms of biological role, bifunctional enzyme; part of the gene cluster that mediates the biosynthesis of flavunoidine, an alkaloidal terpenoid with a tetracyclic cage-like core connected to dimethylcadaverine via a C-N bond and acylated with 5,5-dimethyl-L-pipecolate. The tetracyclic core is synthesized by the terpene cyclase flvE and the cytochrome P450 monooxygenase flvD. The terpene cyclase flvE catalyzes the cyclization of farnesyl pyrophosphate (FPP) to form (1R,4R,5S)-(+)-acoradiene and the cytochrome P450 monooxygenase flvD is then responsible for oxidative conversion of (1R,4R,5S)-(+)-acoradiene into the tetracyclic cage present in the final product flavunoidine. In parallel, the N-methyltransferase flvH dimethylates L-lysine to give N,N-dimethyl-L-Lysin which is decarboxylated by flvG to afford dimethylcadaverine. The terpene cyclase-like protein flvF is the enzyme that attaches the dimethylcadaverine precusor at the C-7 of the tetracyclic cage to yield pre-flavunoidine. The cytochrome monooxygenase flvC hydroxylates the C-10 position of pre-flavunoidine whereas the NRPS flvI acylates the terpenoid core at the hydroxylated C-10 with dimethylpipecolate to yield final flavunoidine. The bifunctional enzyme flvA and the dehydrogenase flvB are responsible for the synthesis of the dimethylpipecolate precursor. The PLP-dependent lyase domain of flvA might use L-O-acetyl-homoserine and alpha-keto-isovalerate to form an intermediary ketone that can cyclize intramolecularly to yield an imine. The imine can be reduced by flvB to yield the 6-carboxylated pipecolate. The C-terminal alpha-KG-dependent oxygenase domain of flvA is then proposed to catalyze the decarboxylation to yield dimethylpipecolate. This chain is Bifunctional enzyme flvA, found in Aspergillus flavus (strain ATCC 200026 / FGSC A1120 / IAM 13836 / NRRL 3357 / JCM 12722 / SRRC 167).